We begin with the raw amino-acid sequence, 784 residues long: Toll-like receptor 2 (784 aa).

The N-terminal stretch at 1-20 is a signal peptide; it reads MPHALWTVWVLGAVISLSKE. Residues 21–587 lie on the Extracellular side of the membrane; it reads GVPDQPSSLS…THLSVSECHR (567 aa). Cys31 and Cys37 are joined by a disulfide. 19 LRR repeats span residues 54–77, 78–101, 102–125, 126–150, 151–175, 176–199, 200–223, 224–250, 251–278, 279–308, 309–337, 338–361, 362–388, 389–414, 415–437, 438–457, 458–478, 479–500, and 501–524; these read AVKS…WKCV, NLKA…SSLR, SLEH…RPLS, SLKF…SHLT, NLRI…GLTF, LEEL…SIQN, ISHL…TLSS, LEYL…TNTL, IKKF…YISG, VSEA…VIGK, LETL…LTER, VKRI…HLKS, LEYL…AWPS, LQTL…TLKN, LTKL…WPEK, MKYL…CIPQ, TLEV…ILPQ, VKEL…FLPM, and LLVM…SFQK. Residue Asn115 is glycosylated (N-linked (GlcNAc...) asparagine). N-linked (GlcNAc...) asparagine glycosylation occurs at Asn199. A disulfide bridge links Cys353 with Cys382. Asn414 carries an N-linked (GlcNAc...) asparagine glycan. Cys432 and Cys454 are joined by a disulfide. Asn442 is a glycosylation site (N-linked (GlcNAc...) asparagine). Residues 525-579 enclose the LRRCT domain; it reads LKTLEAGGNNFICSCEFLSFTQEEQALDQILIDWPENYLCDSPSHVRGQRVQDTH. A helical membrane pass occupies residues 588–608; that stretch reads TALVSAVCCALFLSILLTGVL. Residues 609 to 784 are Cytoplasmic-facing; sequence CHHFHGLWYM…WLNLRAAIKS (176 aa). One can recognise a TIR domain in the interval 639–782; it reads ICYDAFVSYS…GFWLNLRAAI (144 aa). Lys754 participates in a covalent cross-link: Glycyl lysine isopeptide (Lys-Gly) (interchain with G-Cter in ubiquitin). The ATG16L1-binding motif motif lies at 761–778; that stretch reads YLEWPTDEAQQEGFWLNL.

It belongs to the Toll-like receptor family. Interacts with LY96, TLR1 and TLR6 (via extracellular domain). TLR2 seems to exist in heterodimers with either TLR1 or TLR6 before stimulation by the ligand. The heterodimers form bigger oligomers in response to their corresponding ligands as well as further heterotypic associations with other receptors such as CD14 and/or CD36. Binds MYD88 (via TIR domain). Interacts with TICAM1. Interacts with CNPY3. Interacts with ATG16L1. Interacts with PPP1R11. Interacts with TICAM2. Interacts with TIRAP. Post-translationally, ubiquitinated at Lys-754 by PPP1R11, leading to its degradation. Deubiquitinated by USP2. In terms of processing, glycosylation of Asn-442 is critical for secretion of the N-terminal ectodomain of TLR2.

The protein localises to the membrane. The protein resides in the cytoplasmic vesicle. Its subcellular location is the phagosome membrane. It is found in the membrane raft. In terms of biological role, cooperates with LY96 to mediate the innate immune response to bacterial lipoproteins and other microbial cell wall components. Cooperates with TLR1 or TLR6 to mediate the innate immune response to bacterial lipoproteins or lipopeptides. Acts via MYD88 and TRAF6, leading to NF-kappa-B activation, cytokine secretion and the inflammatory response. May also promote apoptosis in response to lipoproteins. Forms activation clusters composed of several receptors depending on the ligand, these clusters trigger signaling from the cell surface and subsequently are targeted to the Golgi in a lipid-raft dependent pathway. Forms the cluster TLR2:TLR6:CD14:CD36 in response to diacylated lipopeptides and TLR2:TLR1:CD14 in response to triacylated lipopeptides. In Equus caballus (Horse), this protein is Toll-like receptor 2 (TLR2).